The sequence spans 353 residues: Tetrahedral aminopeptidase (353 aa).

Zn(2+) is bound by residues H68 and D182. The active-site Proton acceptor is the E212. Zn(2+)-binding residues include E213, D235, and H323.

Belongs to the peptidase M42 family. Homododecamer. The assembly of six dimers results in a tetrahedral-shaped structure; all 12 active sites are located on the inside of the tetrahedron. Substrate access is granted by four pores with a maximal diameter of 18 Angstroms, allowing only small peptides and unfolded proteins access to the active site. Beside the four entry ports, TET contains 12 small product release openings, which are large enough to allow passage of only single amino acid residues. Zn(2+) is required as a cofactor. Co(2+) serves as cofactor.

Inhibited by EDTA and bestatin in vitro. Is insensitive to papain, antipain, chymostatin, leupeptin, pepstatin and aprotinin. Functionally, functions as an aminopeptidase, with a clear preference for leucine as the N-terminal amino acid. However, can also cleave moderately long polypeptide substrates of various compositions in a fairly unspecific manner. Has neither carboxypeptidase nor endoproteolytic activities, and it is devoid of N-terminal deblocking activity. Is involved in protein degradation, performing degradation of oligopeptides produced by the proteasome into single amino acids. In Pyrococcus horikoshii (strain ATCC 700860 / DSM 12428 / JCM 9974 / NBRC 100139 / OT-3), this protein is Tetrahedral aminopeptidase (frvX).